We begin with the raw amino-acid sequence, 505 residues long: Histidine ammonia-lyase (505 aa).

Residues 141 to 143 (ASG) constitute a cross-link (5-imidazolinone (Ala-Gly)). A 2,3-didehydroalanine (Ser) modification is found at Ser-142.

The protein belongs to the PAL/histidase family. Post-translationally, contains an active site 4-methylidene-imidazol-5-one (MIO), which is formed autocatalytically by cyclization and dehydration of residues Ala-Ser-Gly.

Its subcellular location is the cytoplasm. It catalyses the reaction L-histidine = trans-urocanate + NH4(+). Its pathway is amino-acid degradation; L-histidine degradation into L-glutamate; N-formimidoyl-L-glutamate from L-histidine: step 1/3. The protein is Histidine ammonia-lyase of Bacillus cereus (strain AH187).